A 246-amino-acid chain; its full sequence is 2-C-methyl-D-erythritol 4-phosphate cytidylyltransferase (246 aa).

Belongs to the IspD/TarI cytidylyltransferase family. IspD subfamily.

The enzyme catalyses 2-C-methyl-D-erythritol 4-phosphate + CTP + H(+) = 4-CDP-2-C-methyl-D-erythritol + diphosphate. It participates in isoprenoid biosynthesis; isopentenyl diphosphate biosynthesis via DXP pathway; isopentenyl diphosphate from 1-deoxy-D-xylulose 5-phosphate: step 2/6. In terms of biological role, catalyzes the formation of 4-diphosphocytidyl-2-C-methyl-D-erythritol from CTP and 2-C-methyl-D-erythritol 4-phosphate (MEP). This Chlorobaculum parvum (strain DSM 263 / NCIMB 8327) (Chlorobium vibrioforme subsp. thiosulfatophilum) protein is 2-C-methyl-D-erythritol 4-phosphate cytidylyltransferase.